We begin with the raw amino-acid sequence, 176 residues long: Oligoribonuclease (176 aa).

An Exonuclease domain is found at 2-159 (EMTGLNPETD…DDILESIEEM (158 aa)). The active site involves tyrosine 117.

It belongs to the oligoribonuclease family.

The protein resides in the cytoplasm. In terms of biological role, 3'-to-5' exoribonuclease specific for small oligoribonucleotides. The protein is Oligoribonuclease of Neisseria gonorrhoeae (strain ATCC 700825 / FA 1090).